Here is a 110-residue protein sequence, read N- to C-terminus: N(4)-acetylcytidine amidohydrolase (110 aa).

Residues T6–Q93 enclose the ASCH domain. K20 (proton acceptor) is an active-site residue. T23 acts as the Nucleophile in catalysis. The Proton donor role is filled by E73.

It belongs to the N(4)-acetylcytidine amidohydrolase family.

The enzyme catalyses N(4)-acetylcytidine + H2O = cytidine + acetate + H(+). The catalysed reaction is N(4)-acetyl-2'-deoxycytidine + H2O = 2'-deoxycytidine + acetate + H(+). It catalyses the reaction N(4)-acetylcytosine + H2O = cytosine + acetate + H(+). Its function is as follows. Catalyzes the hydrolysis of N(4)-acetylcytidine (ac4C). In Shewanella sp. (strain ANA-3), this protein is N(4)-acetylcytidine amidohydrolase.